Consider the following 464-residue polypeptide: MSEARKDTVTVVGAGLVGSLLSIYLARRGHTVELLERRPDMRRETVDGGRSINLAISTRGLHALRQVGLENEALKHAIPMRGRMIHPPQGELVYQPYGKDDSQHINAMSRGWLNAFLMTAAEATGKVRIRFKQRVTDVDFGSGALTVHDDATGEARQEPGRVVFGTDGSASAIRQALEKRPDFKGTQEQLGHGYKELTIPAGPGGAFQMEKHALHIWPRGTFMLIALPDEEGSFTCTLFLPWQGPVSFASLDTPAKLEAFFGAQFPDAKALIPDLVEAFFSRPTGSMVTVKGAPWHAGGQTLLLGDAAHAIVPFFGQGMNCGFEDCVVLDQLLGQGAGWEQVFTDFERLRKTNADAIADMAVENFVEMRDSTGDPRFLFRKAVEKVLLNAFPGEFVSRYSLVSFSHVPYRLAYQMGALTDGIVSELSEGLPRAEDVDLKRAAELIRSRLTPFMKEHADGFRTEG.

This sequence belongs to the aromatic-ring hydroxylase family. KMO subfamily. FAD serves as cofactor.

The catalysed reaction is L-kynurenine + NADPH + O2 + H(+) = 3-hydroxy-L-kynurenine + NADP(+) + H2O. Its pathway is cofactor biosynthesis; NAD(+) biosynthesis; quinolinate from L-kynurenine: step 1/3. Functionally, catalyzes the hydroxylation of L-kynurenine (L-Kyn) to form 3-hydroxy-L-kynurenine (L-3OHKyn). Required for synthesis of quinolinic acid. In Myxococcus xanthus (strain DK1622), this protein is Kynurenine 3-monooxygenase.